The sequence spans 416 residues: Serine hydroxymethyltransferase (416 aa).

Residues Leu118 and 122–124 (GHL) each bind (6S)-5,6,7,8-tetrahydrofolate. Lys226 is subject to N6-(pyridoxal phosphate)lysine. Glu242 is a binding site for (6S)-5,6,7,8-tetrahydrofolate.

The protein belongs to the SHMT family. As to quaternary structure, homodimer. The cofactor is pyridoxal 5'-phosphate.

Its subcellular location is the cytoplasm. It catalyses the reaction (6R)-5,10-methylene-5,6,7,8-tetrahydrofolate + glycine + H2O = (6S)-5,6,7,8-tetrahydrofolate + L-serine. Its pathway is one-carbon metabolism; tetrahydrofolate interconversion. The protein operates within amino-acid biosynthesis; glycine biosynthesis; glycine from L-serine: step 1/1. In terms of biological role, catalyzes the reversible interconversion of serine and glycine with tetrahydrofolate (THF) serving as the one-carbon carrier. This reaction serves as the major source of one-carbon groups required for the biosynthesis of purines, thymidylate, methionine, and other important biomolecules. Also exhibits THF-independent aldolase activity toward beta-hydroxyamino acids, producing glycine and aldehydes, via a retro-aldol mechanism. This Helicobacter pylori (strain J99 / ATCC 700824) (Campylobacter pylori J99) protein is Serine hydroxymethyltransferase.